Reading from the N-terminus, the 296-residue chain is Elongation factor Ts (296 aa).

The interval 79–82 is involved in Mg(2+) ion dislocation from EF-Tu; the sequence is TDFV.

Belongs to the EF-Ts family.

It localises to the cytoplasm. In terms of biological role, associates with the EF-Tu.GDP complex and induces the exchange of GDP to GTP. It remains bound to the aminoacyl-tRNA.EF-Tu.GTP complex up to the GTP hydrolysis stage on the ribosome. The sequence is that of Elongation factor Ts (tsf) from Spiroplasma citri.